A 380-amino-acid polypeptide reads, in one-letter code: Anthranilate phosphoribosyltransferase (380 aa).

5-phospho-alpha-D-ribose 1-diphosphate-binding residues include Gly-109, Asn-119, Ser-121, Thr-122, Lys-142, Ser-144, and Ser-146. Mg(2+)-binding residues include Asp-258 and Glu-259.

The protein belongs to the anthranilate phosphoribosyltransferase family. As to quaternary structure, homodimer. Mg(2+) is required as a cofactor.

The catalysed reaction is N-(5-phospho-beta-D-ribosyl)anthranilate + diphosphate = 5-phospho-alpha-D-ribose 1-diphosphate + anthranilate. It functions in the pathway amino-acid biosynthesis; L-tryptophan biosynthesis; L-tryptophan from chorismate: step 2/5. Catalyzes the transfer of the phosphoribosyl group of 5-phosphorylribose-1-pyrophosphate (PRPP) to anthranilate to yield N-(5'-phosphoribosyl)-anthranilate (PRA), the second step in tryptophan biosynthesis. This is Anthranilate phosphoribosyltransferase from Saccharomyces cerevisiae (strain ATCC 204508 / S288c) (Baker's yeast).